Consider the following 503-residue polypeptide: Cytochrome P450 6l1 (503 aa).

Heme is bound at residue cysteine 438.

The protein belongs to the cytochrome P450 family. Requires heme as cofactor. In terms of tissue distribution, detected only in testes and accessory glands of male adults.

The protein resides in the endoplasmic reticulum membrane. It localises to the microsome membrane. The chain is Cytochrome P450 6l1 (CYP6L1) from Blattella germanica (German cockroach).